The primary structure comprises 219 residues: tRNA (guanine-N(7)-)-methyltransferase (219 aa).

Residues E43, D68, E101, and N124 each contribute to the S-adenosyl-L-methionine site. K128 and D160 together coordinate substrate.

The protein belongs to the class I-like SAM-binding methyltransferase superfamily. TrmB family.

It carries out the reaction guanosine(46) in tRNA + S-adenosyl-L-methionine = N(7)-methylguanosine(46) in tRNA + S-adenosyl-L-homocysteine. It participates in tRNA modification; N(7)-methylguanine-tRNA biosynthesis. Functionally, catalyzes the formation of N(7)-methylguanine at position 46 (m7G46) in tRNA. This is tRNA (guanine-N(7)-)-methyltransferase from Clostridium botulinum (strain Alaska E43 / Type E3).